The chain runs to 786 residues: Endonuclease MutS2 (786 aa).

335–342 (GPNTGGKT) is a binding site for ATP. The Smr domain occupies 711 to 786 (LDLRGERFEN…GLGVTVVELK (76 aa)).

This sequence belongs to the DNA mismatch repair MutS family. MutS2 subfamily. Homodimer. Binds to stalled ribosomes, contacting rRNA.

Functionally, endonuclease that is involved in the suppression of homologous recombination and thus may have a key role in the control of bacterial genetic diversity. Its function is as follows. Acts as a ribosome collision sensor, splitting the ribosome into its 2 subunits. Detects stalled/collided 70S ribosomes which it binds and splits by an ATP-hydrolysis driven conformational change. Acts upstream of the ribosome quality control system (RQC), a ribosome-associated complex that mediates the extraction of incompletely synthesized nascent chains from stalled ribosomes and their subsequent degradation. Probably generates substrates for RQC. The protein is Endonuclease MutS2 of Bacillus thuringiensis (strain Al Hakam).